The primary structure comprises 241 residues: MAGHSKWANIKHKKAAADAKRGKIWTRLIKEITVAAKLGGGDPDSNPRLRLSMDKAMDANMPKDNIQRAIQRGVGGLEGVNYEEIRYEGYGLSGAAIIVDCLTDNRTRTVAEVRHAFSKHGGNMGTEGSVAFMFTHCGQFLFAPGTPEDKLMDAALEAGADDVVTNEDGSIEVTCPPNDFSAVKAALEAAGFKAEVADVVMKPQNEVDFTGDDAVKMQKLLDALENLDDVQEVFTNAVIEE.

It belongs to the TACO1 family.

Its subcellular location is the cytoplasm. The sequence is that of Probable transcriptional regulatory protein Reut_A2522 from Cupriavidus pinatubonensis (strain JMP 134 / LMG 1197) (Cupriavidus necator (strain JMP 134)).